The primary structure comprises 773 residues: ATP-dependent RNA helicase MAK5 (773 aa).

Residues 73–82 (KDSNKEKVGD) show a composition bias toward basic and acidic residues. 2 disordered regions span residues 73–99 (KDSN…ESEL) and 114–144 (SAAS…VDED). A compositionally biased stretch (acidic residues) spans 83–99 (DQESVENESGSDSESEL). Thr135 carries the phosphothreonine modification. Phosphoserine is present on Ser138. A Q motif motif is present at residues 171–199 (EWTNLAPLSMTILQSLQNLNFLRPTEIQK). The 198-residue stretch at 202–399 (IPVIMQGVDV…SSSRQVKDRR (198 aa)) folds into the Helicase ATP-binding domain. Position 215–222 (215–222 (ASTGSGKT)) interacts with ATP. Residues 333–336 (DEAD) carry the DEAD box motif. The Helicase C-terminal domain occupies 452-615 (DLYCYYFLTM…STDLNSRSTN (164 aa)). A Phosphoserine modification is found at Ser678.

This sequence belongs to the DEAD box helicase family. DDX24/MAK5 subfamily.

The protein resides in the nucleus. Its subcellular location is the nucleolus. It carries out the reaction ATP + H2O = ADP + phosphate + H(+). Functionally, ATP-binding RNA helicase involved in the biogenesis of 60S ribosomal subunits and is required for the normal formation of 25S and 5.8S rRNAs. Required for the maintenance of dsRNA killer plasmid. The polypeptide is ATP-dependent RNA helicase MAK5 (MAK5) (Saccharomyces cerevisiae (strain ATCC 204508 / S288c) (Baker's yeast)).